We begin with the raw amino-acid sequence, 596 residues long: Probable tripeptidyl-peptidase SED2 (596 aa).

The first 16 residues, 1–16 (MRLLKFVCLLASVAAA), serve as a signal peptide directing secretion. Residues 17–203 (KPTPGASHKV…LESMSVEEFA (187 aa)) constitute a propeptide, removed in mature form. Residues 210–596 (LVTTACLREL…NFQALTKVLP (387 aa)) enclose the Peptidase S53 domain. Residue Asn265 is glycosylated (N-linked (GlcNAc...) asparagine). Catalysis depends on charge relay system residues Glu286 and Asp290. The N-linked (GlcNAc...) asparagine glycan is linked to Asn403. Catalysis depends on Ser501, which acts as the Charge relay system. 2 residues coordinate Ca(2+): Asp543 and Ile544. N-linked (GlcNAc...) asparagine glycosylation is present at Asn572. Ca(2+) contacts are provided by Gly576 and Asp578.

The cofactor is Ca(2+).

The protein resides in the secreted. The protein localises to the extracellular space. The catalysed reaction is Release of an N-terminal tripeptide from a polypeptide.. In terms of biological role, secreted tripeptidyl-peptidase which degrades proteins at acidic pHs and is involved in virulence. This chain is Probable tripeptidyl-peptidase SED2 (SED2), found in Trichophyton verrucosum (strain HKI 0517).